The primary structure comprises 62 residues: Beta-defensin 133 (62 aa).

An N-terminal signal peptide occupies residues 1–21 (MKIHIFLFVLFFFLVPIATRG). Cystine bridges form between cysteine 32–cysteine 60 and cysteine 39–cysteine 53.

The protein belongs to the beta-defensin family.

Its subcellular location is the secreted. Functionally, has antibacterial activity. The chain is Beta-defensin 133 (DEFB133) from Pan troglodytes (Chimpanzee).